Consider the following 431-residue polypeptide: tRNA (adenine(37)-N6)-methyltransferase (431 aa).

The TsaA-like domain occupies 30–168 (TEPIGYLESC…YIADYDSPQN (139 aa)). S-adenosyl-L-methionine-binding positions include 47–49 (PRQ), 90–91 (HK), Arg117, Leu127, and 148–151 (IHGT). Disordered stretches follow at residues 167-189 (QNLE…ATAN) and 201-243 (KAQP…DRER). Basic and acidic residues predominate over residues 207 to 243 (STKEKPKCREHRTSDENSQKFRDTSEIQHTLPEDRER).

This sequence belongs to the tRNA methyltransferase O family.

It carries out the reaction N(6)-L-threonylcarbamoyladenosine(37) in tRNA + S-adenosyl-L-methionine = N(6)-methyl,N(6)-L-threonylcarbamoyladenosine(37) in tRNA + S-adenosyl-L-homocysteine + H(+). Functionally, S-adenosyl-L-methionine-dependent methyltransferase responsible for the addition of the methyl group in the formation of N6-methyl-N6-threonylcarbamoyladenosine at position 37 (m(6)t(6)A37) of the tRNA anticodon loop of tRNA(Ser)(GCU). The methyl group of m(6)t(6)A37 may improve the efficiency of the tRNA decoding ability. May bind to tRNA. The protein is tRNA (adenine(37)-N6)-methyltransferase of Rattus norvegicus (Rat).